Here is a 328-residue protein sequence, read N- to C-terminus: dITP/XTP pyrophosphatase (328 aa).

Residues 1–129 form a unknown region; sequence MSEKIYEYKD…ATSEQGFGDT (129 aa). Residues 130–324 form an NTP pyrophosphatase region; it reads ILIATRNEGK…KLMEVFPAWQ (195 aa). Residue 134–139 coordinates substrate; sequence TRNEGK. Catalysis depends on D196, which acts as the Proton acceptor. D196 contributes to the Mg(2+) binding site. Residues S197, 280 to 283, K303, and 308 to 309 each bind substrate; these read FGYD and HR.

Belongs to the HAM1 NTPase family. As to quaternary structure, homodimer. It depends on Mg(2+) as a cofactor.

The enzyme catalyses XTP + H2O = XMP + diphosphate + H(+). It catalyses the reaction dITP + H2O = dIMP + diphosphate + H(+). It carries out the reaction ITP + H2O = IMP + diphosphate + H(+). In terms of biological role, pyrophosphatase that catalyzes the hydrolysis of nucleoside triphosphates to their monophosphate derivatives, with a high preference for the non-canonical purine nucleotides XTP (xanthosine triphosphate), dITP (deoxyinosine triphosphate) and ITP. Seems to function as a house-cleaning enzyme that removes non-canonical purine nucleotides from the nucleotide pool, thus preventing their incorporation into DNA/RNA and avoiding chromosomal lesions. The polypeptide is dITP/XTP pyrophosphatase (Streptococcus pyogenes serotype M18 (strain MGAS8232)).